The following is a 178-amino-acid chain: Large ribosomal subunit protein uL6 (178 aa).

It belongs to the universal ribosomal protein uL6 family. In terms of assembly, part of the 50S ribosomal subunit.

In terms of biological role, this protein binds to the 23S rRNA, and is important in its secondary structure. It is located near the subunit interface in the base of the L7/L12 stalk, and near the tRNA binding site of the peptidyltransferase center. This Listeria monocytogenes serotype 4a (strain HCC23) protein is Large ribosomal subunit protein uL6.